We begin with the raw amino-acid sequence, 263 residues long: Proteasome subunit alpha (263 aa).

The disordered stretch occupies residues 229 to 263; sequence AALLQDTPPDDADADADAGKKPANDGNLPPNDDKS.

Belongs to the peptidase T1A family. As to quaternary structure, the 20S proteasome core is composed of 14 alpha and 14 beta subunits that assemble into four stacked heptameric rings, resulting in a barrel-shaped structure. The two inner rings, each composed of seven catalytic beta subunits, are sandwiched by two outer rings, each composed of seven alpha subunits. The catalytic chamber with the active sites is on the inside of the barrel. Has a gated structure, the ends of the cylinder being occluded by the N-termini of the alpha-subunits. Is capped by the proteasome-associated ATPase, ARC.

Its subcellular location is the cytoplasm. It participates in protein degradation; proteasomal Pup-dependent pathway. The formation of the proteasomal ATPase ARC-20S proteasome complex, likely via the docking of the C-termini of ARC into the intersubunit pockets in the alpha-rings, may trigger opening of the gate for substrate entry. Interconversion between the open-gate and close-gate conformations leads to a dynamic regulation of the 20S proteasome proteolysis activity. Component of the proteasome core, a large protease complex with broad specificity involved in protein degradation. The chain is Proteasome subunit alpha from Actinosynnema mirum (strain ATCC 29888 / DSM 43827 / JCM 3225 / NBRC 14064 / NCIMB 13271 / NRRL B-12336 / IMRU 3971 / 101).